Here is a 127-residue protein sequence, read N- to C-terminus: Large ribosomal subunit protein uL22c (127 aa).

This sequence belongs to the universal ribosomal protein uL22 family. As to quaternary structure, part of the 50S ribosomal subunit.

It is found in the plastid. Its subcellular location is the chloroplast. Its function is as follows. This protein binds specifically to 23S rRNA. The globular domain of the protein is located near the polypeptide exit tunnel on the outside of the subunit, while an extended beta-hairpin is found that lines the wall of the exit tunnel in the center of the 70S ribosome. This chain is Large ribosomal subunit protein uL22c (rpl22), found in Acorus calamus var. americanus (American sweet flag).